The following is a 447-amino-acid chain: N-succinylarginine dihydrolase (447 aa).

Substrate is bound by residues 19–28, N110, and 137–138; these read AGLSFGNEAS and HR. The active site involves E174. A substrate-binding site is contributed by R212. H248 is a catalytic residue. D250 and N359 together coordinate substrate. C365 (nucleophile) is an active-site residue.

The protein belongs to the succinylarginine dihydrolase family. In terms of assembly, homodimer.

The catalysed reaction is N(2)-succinyl-L-arginine + 2 H2O + 2 H(+) = N(2)-succinyl-L-ornithine + 2 NH4(+) + CO2. It functions in the pathway amino-acid degradation; L-arginine degradation via AST pathway; L-glutamate and succinate from L-arginine: step 2/5. In terms of biological role, catalyzes the hydrolysis of N(2)-succinylarginine into N(2)-succinylornithine, ammonia and CO(2). This chain is N-succinylarginine dihydrolase, found in Citrobacter koseri (strain ATCC BAA-895 / CDC 4225-83 / SGSC4696).